The chain runs to 389 residues: Large envelope protein (389 aa).

The residue at position 1 (Met-1) is an N-acetylmethionine. The N-myristoyl glycine; by host moiety is linked to residue Gly-2. The pre-S1 stretch occupies residues 2–108 (GTNLSVPNPL…PPLRDSHPQA (107 aa)). A pre-S region spans residues 2–163 (GTNLSVPNPL…SARTGDPVTI (162 aa)). Over 2–170 (GTNLSVPNPL…VTIMENITSG (169 aa)) the chain is Virion surface; in external conformation. Over 2-242 (GTNLSVPNPL…PGYRWMCLRR (241 aa)) the chain is Intravirion; in internal conformation. Positions 77–95 (VSTIPPPASTNRQSGRQPT) are enriched in polar residues. The tract at residues 77-103 (VSTIPPPASTNRQSGRQPTPISPPLRD) is disordered. The interval 109–163 (MQWNSTALHQALQDPRVRGLYLPAGGSSSGTVNPAPNIASHISSISARTGDPVTI) is pre-S2. A helical membrane pass occupies residues 171–191 (FLGPLLVLQAGFFLLTRILTI). At 192 to 242 (PQSLDSWWTSLNFLGGSPVCLGQNSQSPTSNHSPTSCPPICPGYRWMCLRR) the chain is on the intravirion; in external conformation side. Residues 243–263 (FIIFLFILLLCLIFLLVLLDY) traverse the membrane as a helical segment. The Virion surface portion of the chain corresponds to 264–337 (QGMLPVCPLI…WASVRFSWLS (74 aa)). Residue Asn-309 is glycosylated (N-linked (GlcNAc...) asparagine; by host). A helical transmembrane segment spans residues 338-358 (LLVPFVQWFVGLSPTVWLSAI). The Intravirion segment spans residues 359 to 364 (WMMWYW). The chain crosses the membrane as a helical span at residues 365–387 (GPSLYSIVSPFIPLLPIFFCLWV). Topologically, residues 388–389 (YI) are virion surface.

The protein belongs to the orthohepadnavirus major surface antigen family. In its internal form (Li-HBsAg), interacts with the capsid protein and with the isoform S. Interacts with host chaperone CANX. In terms of assembly, associates with host chaperone CANX through its pre-S2 N glycan; this association may be essential for isoform M proper secretion. As to quaternary structure, interacts with isoform L. Interacts with the antigens of satellite virus HDV (HDVAgs); this interaction is required for encapsidation of HDV genomic RNA. In terms of processing, isoform M is N-terminally acetylated by host at a ratio of 90%, and N-glycosylated by host at the pre-S2 region. Post-translationally, myristoylated.

It is found in the virion membrane. In terms of biological role, the large envelope protein exists in two topological conformations, one which is termed 'external' or Le-HBsAg and the other 'internal' or Li-HBsAg. In its external conformation the protein attaches the virus to cell receptors and thereby initiating infection. This interaction determines the species specificity and liver tropism. This attachment induces virion internalization predominantly through caveolin-mediated endocytosis. The large envelope protein also assures fusion between virion membrane and endosomal membrane. In its internal conformation the protein plays a role in virion morphogenesis and mediates the contact with the nucleocapsid like a matrix protein. Its function is as follows. The middle envelope protein plays an important role in the budding of the virion. It is involved in the induction of budding in a nucleocapsid independent way. In this process the majority of envelope proteins bud to form subviral lipoprotein particles of 22 nm of diameter that do not contain a nucleocapsid. This chain is Large envelope protein, found in Hepatitis B virus genotype A2 subtype adw (isolate Japan/Nishioka/1983) (HBV-A).